The chain runs to 103 residues: Large ribosomal subunit protein bL21 (103 aa).

This sequence belongs to the bacterial ribosomal protein bL21 family. In terms of assembly, part of the 50S ribosomal subunit. Contacts protein L20.

Its function is as follows. This protein binds to 23S rRNA in the presence of protein L20. The protein is Large ribosomal subunit protein bL21 of Salmonella agona (strain SL483).